The sequence spans 271 residues: S-adenosylmethionine decarboxylase proenzyme (271 aa).

The active-site Schiff-base intermediate with substrate; via pyruvic acid is the Ser121. At Ser121 the chain carries Pyruvic acid (Ser); by autocatalysis. The Proton acceptor; for processing activity role is filled by His126. Cys149 serves as the catalytic Proton donor; for catalytic activity.

The protein belongs to the prokaryotic AdoMetDC family. Type 2 subfamily. In terms of assembly, heterooctamer of four alpha and four beta chains arranged as a tetramer of alpha/beta heterodimers. Requires pyruvate as cofactor. Post-translationally, is synthesized initially as an inactive proenzyme. Formation of the active enzyme involves a self-maturation process in which the active site pyruvoyl group is generated from an internal serine residue via an autocatalytic post-translational modification. Two non-identical subunits are generated from the proenzyme in this reaction, and the pyruvate is formed at the N-terminus of the alpha chain, which is derived from the carboxyl end of the proenzyme. The post-translation cleavage follows an unusual pathway, termed non-hydrolytic serinolysis, in which the side chain hydroxyl group of the serine supplies its oxygen atom to form the C-terminus of the beta chain, while the remainder of the serine residue undergoes an oxidative deamination to produce ammonia and the pyruvoyl group blocking the N-terminus of the alpha chain.

It carries out the reaction S-adenosyl-L-methionine + H(+) = S-adenosyl 3-(methylsulfanyl)propylamine + CO2. The protein operates within amine and polyamine biosynthesis; S-adenosylmethioninamine biosynthesis; S-adenosylmethioninamine from S-adenosyl-L-methionine: step 1/1. Its function is as follows. Catalyzes the decarboxylation of S-adenosylmethionine to S-adenosylmethioninamine (dcAdoMet), the propylamine donor required for the synthesis of the polyamines spermine and spermidine from the diamine putrescine. The chain is S-adenosylmethionine decarboxylase proenzyme from Clostridium perfringens (strain SM101 / Type A).